A 532-amino-acid chain; its full sequence is Tyrosinase (532 aa).

A signal peptide spans Met-1–Gly-22. Topologically, residues Gln-23–Trp-479 are lumenal, melanosome. 3 N-linked (GlcNAc...) asparagine glycosylation sites follow: Asn-90, Asn-115, and Asn-165. The Cu cation site is built by His-184, His-206, and His-215. Residues Asn-234 and Asn-341 are each glycosylated (N-linked (GlcNAc...) asparagine). 2 residues coordinate Cu cation: His-367 and His-371. Asn-375 carries an N-linked (GlcNAc...) asparagine glycan. His-394 is a Cu cation binding site. A helical transmembrane segment spans residues Leu-480–Leu-500. Residues Thr-501–Leu-532 lie on the Cytoplasmic side of the membrane.

Belongs to the tyrosinase family. As to quaternary structure, active tyrosinase has been found as a homodimer and homotetramer. It depends on Cu(2+) as a cofactor. Frog skin.

The protein resides in the melanosome membrane. The catalysed reaction is 2 L-dopa + O2 = 2 L-dopaquinone + 2 H2O. It catalyses the reaction L-tyrosine + O2 = L-dopaquinone + H2O. Its activity is regulated as follows. Activated by trypsin, chymotrypsin and subtilisin. Activated by alpha-chymotrypsin, thermolysin and Pronase. Inhibited by its product L-DOPA and tyrosine. Its function is as follows. This is a copper-containing oxidase that functions in the formation of pigments such as melanins and other polyphenolic compounds. Catalyzes the initial and rate limiting step in the cascade of reactions leading to melanin production from tyrosine. In addition to hydroxylating tyrosine to DOPA (3,4-dihydroxyphenylalanine), also catalyzes the oxidation of DOPA to DOPA-quinone. The polypeptide is Tyrosinase (Pelophylax lessonae (Pool frog)).